A 542-amino-acid polypeptide reads, in one-letter code: uncharacterized protein (542 aa).

The interval 256–275 is disordered; the sequence is KKSTTTSSPPITTTHLSKPE. Positions 258-269 are enriched in low complexity; the sequence is STTTSSPPITTT.

This is an uncharacterized protein from Caenorhabditis elegans.